A 71-amino-acid chain; its full sequence is Sec-independent protein translocase protein TatA (71 aa).

Residues 1–21 (MGSFSLLHWLVVLVIVLLVFG) form a helical membrane-spanning segment. The disordered stretch occupies residues 43–71 (LREDDKPTDQLGSTSQSTASGPQQDHGKH). Polar residues predominate over residues 52 to 65 (QLGSTSQSTASGPQ).

This sequence belongs to the TatA/E family. As to quaternary structure, the Tat system comprises two distinct complexes: a TatABC complex, containing multiple copies of TatA, TatB and TatC subunits, and a separate TatA complex, containing only TatA subunits. Substrates initially bind to the TatABC complex, which probably triggers association of the separate TatA complex to form the active translocon.

Its subcellular location is the cell inner membrane. In terms of biological role, part of the twin-arginine translocation (Tat) system that transports large folded proteins containing a characteristic twin-arginine motif in their signal peptide across membranes. TatA could form the protein-conducting channel of the Tat system. The protein is Sec-independent protein translocase protein TatA of Xylella fastidiosa (strain 9a5c).